A 116-amino-acid chain; its full sequence is NADH-quinone oxidoreductase subunit A (116 aa).

Transmembrane regions (helical) follow at residues 3–23 (FTLL…VIAL), 61–81 (FAIL…WAVI), and 88–108 (QGLI…AYAW).

Belongs to the complex I subunit 3 family. As to quaternary structure, NDH-1 is composed of 14 different subunits. Subunits NuoA, H, J, K, L, M, N constitute the membrane sector of the complex.

It is found in the cell inner membrane. The enzyme catalyses a quinone + NADH + 5 H(+)(in) = a quinol + NAD(+) + 4 H(+)(out). Functionally, NDH-1 shuttles electrons from NADH, via FMN and iron-sulfur (Fe-S) centers, to quinones in the respiratory chain. The immediate electron acceptor for the enzyme in this species is believed to be a menaquinone. Couples the redox reaction to proton translocation (for every two electrons transferred, four hydrogen ions are translocated across the cytoplasmic membrane), and thus conserves the redox energy in a proton gradient. This chain is NADH-quinone oxidoreductase subunit A, found in Bacteroides fragilis (strain ATCC 25285 / DSM 2151 / CCUG 4856 / JCM 11019 / LMG 10263 / NCTC 9343 / Onslow / VPI 2553 / EN-2).